Consider the following 1356-residue polypeptide: Pleckstrin homology domain-containing family H member 1 (1356 aa).

The stretch at 27-172 (FRLQASKIRE…QDALEDLRMT (146 aa)) forms a coiled coil. Disordered stretches follow at residues 179 to 203 (VVPE…EQDS), 256 to 314 (HLQK…PKVR), and 354 to 414 (LHSP…PPLH). Polar residues-rich tracts occupy residues 194-203 (PSDQPVEQDS), 256-265 (HLQKEGSPSQ), and 285-297 (VTAQ…GTKT). The stretch at 359–407 (SSKSEARAKVREEAEKMEMEALPPSGKQEERESLKSRRGELEDVELENK) forms a coiled coil. Basic and acidic residues-rich tracts occupy residues 362–377 (SEAR…KMEM) and 385–399 (KQEE…RGEL). Ser451 is modified (phosphoserine). 2 consecutive PH domains span residues 572 to 666 (ALEK…SLLK) and 681 to 790 (KPTV…VAAG). Residue Ser739 is modified to Phosphoserine. In terms of domain architecture, MyTH4 spans 826 to 980 (YSQEGLCASL…PSRMEVVSIL (155 aa)). Positions 991 to 1327 (FSIPVHFANG…NHCSATVNLS (337 aa)) constitute an FERM domain.

This chain is Pleckstrin homology domain-containing family H member 1 (Plekhh1), found in Mus musculus (Mouse).